Reading from the N-terminus, the 341-residue chain is tRNA N6-adenosine threonylcarbamoyltransferase (341 aa).

Residues His114 and His118 each contribute to the Fe cation site. Substrate is bound by residues Leu136 to Gly140, Asp169, Gly182, Asp186, and Asn278. Asp304 contributes to the Fe cation binding site.

This sequence belongs to the KAE1 / TsaD family. The cofactor is Fe(2+).

It is found in the cytoplasm. It carries out the reaction L-threonylcarbamoyladenylate + adenosine(37) in tRNA = N(6)-L-threonylcarbamoyladenosine(37) in tRNA + AMP + H(+). Functionally, required for the formation of a threonylcarbamoyl group on adenosine at position 37 (t(6)A37) in tRNAs that read codons beginning with adenine. Is involved in the transfer of the threonylcarbamoyl moiety of threonylcarbamoyl-AMP (TC-AMP) to the N6 group of A37, together with TsaE and TsaB. TsaD likely plays a direct catalytic role in this reaction. This is tRNA N6-adenosine threonylcarbamoyltransferase from Lactococcus lactis subsp. cremoris (strain SK11).